The sequence spans 702 residues: Methionine--tRNA ligase (702 aa).

A 'HIGH' region motif is present at residues 14-24; that stretch reads PYANGPVHLGH. Residues Cys146, Cys149, Cys159, and Cys162 each coordinate Zn(2+). The 'KMSKS' region motif lies at 344–348; it reads KFSKS. Position 347 (Lys347) interacts with ATP. The tRNA-binding domain maps to 601-702; that stretch reads DFQKVDLRAA…GEKINGSSVQ (102 aa).

It belongs to the class-I aminoacyl-tRNA synthetase family. MetG type 1 subfamily. In terms of assembly, homodimer. The cofactor is Zn(2+).

The protein resides in the cytoplasm. The catalysed reaction is tRNA(Met) + L-methionine + ATP = L-methionyl-tRNA(Met) + AMP + diphosphate. Is required not only for elongation of protein synthesis but also for the initiation of all mRNA translation through initiator tRNA(fMet) aminoacylation. The protein is Methionine--tRNA ligase of Chlorobium phaeovibrioides (strain DSM 265 / 1930) (Prosthecochloris vibrioformis (strain DSM 265)).